The primary structure comprises 1240 residues: DNA polymerase II large subunit (1240 aa).

Belongs to the archaeal DNA polymerase II family. Heterodimer of a large subunit and a small subunit.

The enzyme catalyses DNA(n) + a 2'-deoxyribonucleoside 5'-triphosphate = DNA(n+1) + diphosphate. It catalyses the reaction Exonucleolytic cleavage in the 3'- to 5'-direction to yield nucleoside 5'-phosphates.. Possesses two activities: a DNA synthesis (polymerase) and an exonucleolytic activity that degrades single-stranded DNA in the 3'- to 5'-direction. Has a template-primer preference which is characteristic of a replicative DNA polymerase. This chain is DNA polymerase II large subunit, found in Methanopyrus kandleri (strain AV19 / DSM 6324 / JCM 9639 / NBRC 100938).